We begin with the raw amino-acid sequence, 519 residues long: F-box only protein 31-A (519 aa).

The tract at residues 11 to 37 is disordered; sequence GQSGGCRRRQQRKGAGNDPELEDEEEE. In terms of domain architecture, F-box spans 54 to 100; the sequence is PHSLLLLPPEILVEIFSLLPGTELGGLAQVCSKFRQILTTDTIWKRR. Zn(2+) is bound by residues Cys196, His204, Cys220, and His226. Basic and acidic residues predominate over residues 369-390; it reads REQRQTDNEEDDGRGAGPDKAE. The segment at 369–424 is disordered; sequence REQRQTDNEEDDGRGAGPDKAEPAQQPAPLLRPPNEDANGADDDGDGGEQKPPNVQ.

This sequence belongs to the FBXO31 family. In terms of assembly, part of a SCF (SKP1-cullin-F-box) protein ligase complex SCF(FBXO31).

Its subcellular location is the cytoplasm. The protein operates within protein modification; protein ubiquitination. Substrate-recognition component of the SCF(FBXO31) protein ligase complex, which specifically mediates the ubiquitination of proteins amidated at their C-terminus in response to oxidative stress, leading to their degradation by the proteasome. Fbxo31 specifically recognizes and binds C-terminal peptides bearing an amide: C-terminal amidation in response to oxidative stress takes place following protein fragmentation. The SCF(FBXO31) also plays a role in G1 arrest following DNA damage by mediating ubiquitination of phosphorylated cyclin-D1 (ccnd1), promoting its degradation by the proteasome, resulting in G1 arrest. The SCF(FBXO31) complex is however not a major regulator of ccnd1 stability during the G1/S transition. This chain is F-box only protein 31-A (fbxo31-a), found in Xenopus laevis (African clawed frog).